A 499-amino-acid chain; its full sequence is MAEEHGGLDWLRGRSVLVAGAGVSGRATIEPLRDLGALVTVTDANVDALAECARLGAATVPIDDLLAERDRVAEFALVVTSPGFRPDAPLLSLAAGDGVPIWGDIEFSWHVDRAGLYGPPRRWLVVTGTNGKTTTTSMLQSILEAAELPSLACGNIGIPVLDALRQTEPRAEALAVELSSFQLHWAPSVRPTAGAILNIAEDHLDWHGGMQPYIDAKARALTGEVAVLGLDDEVASSLFSSSPAVRTVGFRLGVPAPGELGVEDGYLVDRAFADGERLAPAEGITPPGPAGLMDALAAAALARAIGVPPDAVAAGLAAHVVGPHRAALVAEVGGVTFVDDSKATNPHAARPSILAHERVVWIAGGLLKGARVDDLVREVASRLAGAVLLGRDAMQIAESLARHAPEVPVVTVETGDDAGVSAVPQTATHRVVLPADTDSDAVMGVVVREAAALATAGDSVVLAPAAASLDMFASYGHRGDSFTDAVGRLDASDISRTLR.

An ATP-binding site is contributed by 128 to 134; it reads GTNGKTT.

Belongs to the MurCDEF family.

The protein localises to the cytoplasm. It catalyses the reaction UDP-N-acetyl-alpha-D-muramoyl-L-alanine + D-glutamate + ATP = UDP-N-acetyl-alpha-D-muramoyl-L-alanyl-D-glutamate + ADP + phosphate + H(+). It functions in the pathway cell wall biogenesis; peptidoglycan biosynthesis. In terms of biological role, cell wall formation. Catalyzes the addition of glutamate to the nucleotide precursor UDP-N-acetylmuramoyl-L-alanine (UMA). This is UDP-N-acetylmuramoylalanine--D-glutamate ligase from Rhodococcus jostii (strain RHA1).